A 272-amino-acid chain; its full sequence is NH(3)-dependent NAD(+) synthetase (272 aa).

45 to 52 (GISGGQDS) is a binding site for ATP. Mg(2+) is bound at residue aspartate 51. Arginine 138 lines the deamido-NAD(+) pocket. Residue threonine 158 coordinates ATP. Glutamate 163 is a Mg(2+) binding site. Residues lysine 171 and aspartate 178 each contribute to the deamido-NAD(+) site. The ATP site is built by lysine 187 and threonine 209. 258–259 (HK) contributes to the deamido-NAD(+) binding site.

The protein belongs to the NAD synthetase family. In terms of assembly, homodimer.

The catalysed reaction is deamido-NAD(+) + NH4(+) + ATP = AMP + diphosphate + NAD(+) + H(+). It functions in the pathway cofactor biosynthesis; NAD(+) biosynthesis; NAD(+) from deamido-NAD(+) (ammonia route): step 1/1. Catalyzes the ATP-dependent amidation of deamido-NAD to form NAD. Uses ammonia as a nitrogen source. This chain is NH(3)-dependent NAD(+) synthetase, found in Bacillus thuringiensis subsp. konkukian (strain 97-27).